We begin with the raw amino-acid sequence, 59 residues long: uncharacterized protein (59 aa).

This is an uncharacterized protein from Torque teno tupaia virus (isolate Tbc-TTV14).